The following is a 1164-amino-acid chain: DNA-directed RNA polymerase 132 kDa polypeptide (1164 aa).

It belongs to the RNA polymerase beta chain family. The DNA-dependent RNA polymerase used for intermediate and late genes expression consists of eight subunits (147) kDa, (133) kDa, (35) kDa, (30) kDa, (22) kDa, (19) kDa, (18) kDa and (7) kDa totalling more than 500 kDa in mass. The same holoenzyme, with the addition of the transcription-specificity factor RAP94, is used for early gene expression.

Its subcellular location is the virion. The enzyme catalyses RNA(n) + a ribonucleoside 5'-triphosphate = RNA(n+1) + diphosphate. Its function is as follows. Part of the DNA-dependent RNA polymerase which catalyzes the transcription of viral DNA into RNA using the four ribonucleoside triphosphates as substrates. Responsible for the transcription of early, intermediate and late genes. DNA-dependent RNA polymerase associates with the early transcription factor (ETF), itself composed of D6 and A7, thereby allowing the early genes transcription. Late transcription, and probably also intermediate transcription, require newly synthesized RNA polymerase. This chain is DNA-directed RNA polymerase 132 kDa polypeptide (RPO132), found in Cowpox virus (strain GRI-90 / Grishak) (CPV).